An 81-amino-acid chain; its full sequence is uncharacterized protein (81 aa).

Transmembrane regions (helical) follow at residues 10-30 and 56-76; these read FFVL…FLLL and VLYL…AFAI.

It localises to the host membrane. This is an uncharacterized protein from Acidianus two-tailed virus (ATV).